Consider the following 98-residue polypeptide: Large ribosomal subunit protein uL23 (98 aa).

This sequence belongs to the universal ribosomal protein uL23 family. Part of the 50S ribosomal subunit. Contacts protein L29, and trigger factor when it is bound to the ribosome.

One of the early assembly proteins it binds 23S rRNA. One of the proteins that surrounds the polypeptide exit tunnel on the outside of the ribosome. Forms the main docking site for trigger factor binding to the ribosome. This is Large ribosomal subunit protein uL23 from Dinoroseobacter shibae (strain DSM 16493 / NCIMB 14021 / DFL 12).